The following is a 381-amino-acid chain: Alkanesulfonate monooxygenase (381 aa).

This sequence belongs to the SsuD family. Homotetramer.

The catalysed reaction is an alkanesulfonate + FMNH2 + O2 = an aldehyde + FMN + sulfite + H2O + 2 H(+). In terms of biological role, catalyzes the desulfonation of aliphatic sulfonates. The sequence is that of Alkanesulfonate monooxygenase from Escherichia coli O127:H6 (strain E2348/69 / EPEC).